Consider the following 257-residue polypeptide: Small ribosomal subunit protein eS1 (257 aa).

The tract at residues 236–257 (TSAEGEKIERPDDYEPPVQESV) is disordered. Residues 239–248 (EGEKIERPDD) show a composition bias toward basic and acidic residues.

It belongs to the eukaryotic ribosomal protein eS1 family. As to quaternary structure, component of the small ribosomal subunit. Mature ribosomes consist of a small (40S) and a large (60S) subunit. The 40S subunit contains about 33 different proteins and 1 molecule of RNA (18S). The 60S subunit contains about 49 different proteins and 3 molecules of RNA (28S, 5.8S and 5S).

Its subcellular location is the cytoplasm. The chain is Small ribosomal subunit protein eS1 from Brugia malayi (Filarial nematode worm).